Consider the following 391-residue polypeptide: Probable methanogen homoaconitase large subunit (391 aa).

[4Fe-4S] cluster contacts are provided by Cys-275, Cys-333, and Cys-336.

The protein belongs to the aconitase/IPM isomerase family. LeuC type 2 subfamily. Heterotetramer of 2 HacA and 2 HacB proteins.

The catalysed reaction is (2R)-homocitrate = (2R,3S)-homoisocitrate. It carries out the reaction (2R)-homocitrate = cis-homoaconitate + H2O. The enzyme catalyses (2R,3S)-homoisocitrate = cis-homoaconitate + H2O. It catalyses the reaction cis-(homo)2aconitate + H2O = (2R,3S)-iso(homo)2citrate. The catalysed reaction is cis-(homo)3aconitate + H2O = (2R,3S)-iso(homo)3citrate. Its pathway is organic acid metabolism; 2-oxosuberate biosynthesis. Component of a hydro-lyase with broad substrate specificity for cis-unsaturated tricarboxylic acids. Catalyzes both the reversible dehydration of (R)-homocitrate ((R)-2-hydroxybutane-1,2,4-tricarboxylate) to produce cis-homoaconitate ((Z)-but-1-ene-1,2,4-tricarboxylate), and its hydration to homoisocitrate ((1R,2S)-1-hydroxybutane-1,2,4-tricarboxylate). Is also able to hydrate the analogous longer chain substrates cis-homo(2)-aconitate, cis-homo(3)-aconitate. These reactions are part of the biosynthesis pathway of coenzyme B. This chain is Probable methanogen homoaconitase large subunit (hacA), found in Methanosarcina mazei (strain ATCC BAA-159 / DSM 3647 / Goe1 / Go1 / JCM 11833 / OCM 88) (Methanosarcina frisia).